The primary structure comprises 331 residues: DNA fragmentation factor subunit alpha (331 aa).

Met1 carries the post-translational modification N-acetylmethionine. The 80-residue stretch at 17 to 96 (PLKPCLLRRN…ALACNEKWIY (80 aa)) folds into the CIDE-N domain. Thr243 carries the phosphothreonine modification. A disordered region spans residues 306–331 (LRNLSARRSPLPGEPQRPKRAKRDSS).

As to quaternary structure, heterodimer of DFFA and DFFB. Post-translationally, caspase-3 cleaves DFF45 at 2 sites to generate an active factor.

Its subcellular location is the cytoplasm. In terms of biological role, inhibitor of the caspase-activated DNase (DFF40). The polypeptide is DNA fragmentation factor subunit alpha (Dffa) (Mus musculus (Mouse)).